Consider the following 174-residue polypeptide: ATP-dependent protease subunit HslV (174 aa).

Residue Thr2 is part of the active site. 3 residues coordinate Na(+): Gly159, Asp162, and Thr165.

Belongs to the peptidase T1B family. HslV subfamily. In terms of assembly, a double ring-shaped homohexamer of HslV is capped on each side by a ring-shaped HslU homohexamer. The assembly of the HslU/HslV complex is dependent on binding of ATP.

The protein localises to the cytoplasm. The enzyme catalyses ATP-dependent cleavage of peptide bonds with broad specificity.. Allosterically activated by HslU binding. Protease subunit of a proteasome-like degradation complex believed to be a general protein degrading machinery. The polypeptide is ATP-dependent protease subunit HslV (Lacticaseibacillus casei (strain BL23) (Lactobacillus casei)).